Here is a 132-residue protein sequence, read N- to C-terminus: Small ribosomal subunit protein uS8 (132 aa).

The protein belongs to the universal ribosomal protein uS8 family. Part of the 30S ribosomal subunit. Contacts proteins S5 and S12.

Functionally, one of the primary rRNA binding proteins, it binds directly to 16S rRNA central domain where it helps coordinate assembly of the platform of the 30S subunit. The sequence is that of Small ribosomal subunit protein uS8 from Borrelia garinii subsp. bavariensis (strain ATCC BAA-2496 / DSM 23469 / PBi) (Borreliella bavariensis).